Reading from the N-terminus, the 204-residue chain is Urease accessory protein UreG (204 aa).

A GTP-binding site is contributed by 13-20; the sequence is GPVGSGKT.

The protein belongs to the SIMIBI class G3E GTPase family. UreG subfamily. In terms of assembly, homodimer. UreD, UreF and UreG form a complex that acts as a GTP-hydrolysis-dependent molecular chaperone, activating the urease apoprotein by helping to assemble the nickel containing metallocenter of UreC. The UreE protein probably delivers the nickel.

Its subcellular location is the cytoplasm. In terms of biological role, facilitates the functional incorporation of the urease nickel metallocenter. This process requires GTP hydrolysis, probably effectuated by UreG. The sequence is that of Urease accessory protein UreG from Acinetobacter baylyi (strain ATCC 33305 / BD413 / ADP1).